We begin with the raw amino-acid sequence, 220 residues long: Probable pterin-4-alpha-carbinolamine dehydratase, chloroplastic (220 aa).

The N-terminal 50 residues, Met-1 to Arg-50, are a transit peptide targeting the chloroplast.

This sequence belongs to the pterin-4-alpha-carbinolamine dehydratase family. Interacts with SDIR1. Interacts with AIRP2. In terms of processing, ubiquitinated by SDIR1. Ubiquitination leads to its subsequent degradation, thus controlling abscisic acid (ABA) signaling. Ubiquitinated by AIRP2. Ubiquitination leads to its subsequent degradation, thus controlling abscisic acid (ABA) signaling during drought stress.

The protein resides in the plastid. It is found in the chloroplast. It localises to the cell membrane. The protein localises to the nucleus. The catalysed reaction is (4aS,6R)-4a-hydroxy-L-erythro-5,6,7,8-tetrahydrobiopterin = (6R)-L-erythro-6,7-dihydrobiopterin + H2O. Functionally, involved in tetrahydrobiopterin biosynthesis. Interacts with and acts downstream of the E3 ubiquitin-protein ligase SDIR1 in abscisic acid (ABA) and salt stress signaling. Regulates the expression of the bZIP transcription factor ABI5, which mediates responses to ABA during seed germination and salt stress. The SDIR1-ATP1/SDIRIP1 complex plays an important role in ABA signaling through the ubiquitination pathway. Acts downstream of AIRP2 in regulation of ABA signaling during drought stress. This chain is Probable pterin-4-alpha-carbinolamine dehydratase, chloroplastic, found in Arabidopsis thaliana (Mouse-ear cress).